The chain runs to 418 residues: Hydroxysteroid dehydrogenase-like protein 2 (418 aa).

Residues Gly-17 to Gly-23, Lys-42, and Asp-74 each bind NADP(+). The residue at position 42 (Lys-42) is an N6-(2-hydroxyisobutyryl)lysine. Lys-116 is subject to N6-acetyllysine. The active-site Proton acceptor is Tyr-168. Position 172 (Lys-172) interacts with NADP(+). The SCP2 domain maps to Arg-306–Asn-415. Lys-318 bears the N6-succinyllysine mark.

It belongs to the short-chain dehydrogenases/reductases (SDR) family. Ubiquitous.

Its subcellular location is the peroxisome. It is found in the mitochondrion. In terms of biological role, has apparently no steroid dehydrogenase activity. Controls bile acid (BA) and lipid metabolism in response to nutritional cues. The polypeptide is Hydroxysteroid dehydrogenase-like protein 2 (Homo sapiens (Human)).